The primary structure comprises 155 residues: Transcriptional repressor NrdR (155 aa).

A zinc finger lies at 3 to 34; sequence CPYCGHLEDRVVDSRETQDGQATRRRRACLSC. The ATP-cone domain maps to 49–139; the sequence is PQVVKKDGRR…VYRAFRDVGE (91 aa).

It belongs to the NrdR family. It depends on Zn(2+) as a cofactor.

Its function is as follows. Negatively regulates transcription of bacterial ribonucleotide reductase nrd genes and operons by binding to NrdR-boxes. This chain is Transcriptional repressor NrdR, found in Anaeromyxobacter dehalogenans (strain 2CP-1 / ATCC BAA-258).